The chain runs to 232 residues: Platelet-activating factor acetylhydrolase IB subunit alpha1 (232 aa).

Position 2 is an N-acetylserine (Ser-2). The residue at position 2 (Ser-2) is a Phosphoserine. Catalysis depends on residues Ser-47, Asp-192, and His-195.

The protein belongs to the 'GDSL' lipolytic enzyme family. Platelet-activating factor acetylhydrolase IB beta/gamma subunits subfamily. In terms of assembly, forms a catalytic dimer which is either homodimer (alpha1/alpha1 homodimer) or heterodimer with PAFAH1B2 (alpha1/alpha2 heterodimer). Component of the cytosolic (PAF-AH (I)) heterotetrameric enzyme, which is composed of PAFAH1B1 (beta), PAFAH1B2 (alpha2) and PAFAH1B3 (alpha1) subunits. The catalytic activity of the enzyme resides in the alpha1 (PAFAH1B3) and alpha2 (PAFAH1B2) subunits, whereas the beta subunit (PAFAH1B1) has regulatory activity. Trimer formation is not essential for the catalytic activity. Interacts with VLDLR; this interaction may modulate the Reelin pathway.

The protein resides in the cytoplasm. The catalysed reaction is a 1-O-alkyl-2-acetyl-sn-glycero-3-phosphocholine + H2O = a 1-O-alkyl-sn-glycero-3-phosphocholine + acetate + H(+). It carries out the reaction 1-O-hexadecyl-2-acetyl-sn-glycero-3-phosphocholine + H2O = 1-O-hexadecyl-sn-glycero-3-phosphocholine + acetate + H(+). It catalyses the reaction 1-O-hexadecyl-2-acetyl-sn-glycero-3-phosphate + H2O = 1-O-hexadecyl-sn-glycero-3-phosphate + acetate + H(+). Its activity is regulated as follows. Beta subunit (PAFAH1B1) inhibits the acetylhydrolase activity of the alpha1/alpha1 catalytic homodimer. Alpha1 catalytic subunit of the cytosolic type I platelet-activating factor (PAF) acetylhydrolase (PAF-AH (I)) heterotetrameric enzyme that catalyzes the hydrolyze of the acetyl group at the sn-2 position of PAF and its analogs and modulates the action of PAF. The activity and substrate specificity of PAF-AH (I) are affected by its subunit composition. Both alpha1/alpha1 homodimer (PAFAH1B3/PAFAH1B3 homodimer) and alpha1/alpha2 heterodimer(PAFAH1B3/PAFAH1B2 heterodimer) hydrolyze 1-O-alkyl-2-acetyl-sn-glycero-3-phosphoric acid (AAGPA) more efficiently than PAF, but they have little hydrolytic activity towards 1-O-alkyl-2-acetyl-sn-glycero-3-phosphorylethanolamine (AAGPE). Plays an important role during the development of brain. The chain is Platelet-activating factor acetylhydrolase IB subunit alpha1 from Bos taurus (Bovine).